The primary structure comprises 129 residues: Lysozyme C (129 aa).

A C-type lysozyme domain is found at Lys1–Leu129. 4 disulfides stabilise this stretch: Cys6-Cys127, Cys30-Cys115, Cys64-Cys80, and Cys76-Cys94. Catalysis depends on residues Glu35 and Asp52.

It belongs to the glycosyl hydrolase 22 family. Monomer.

The protein localises to the secreted. It carries out the reaction Hydrolysis of (1-&gt;4)-beta-linkages between N-acetylmuramic acid and N-acetyl-D-glucosamine residues in a peptidoglycan and between N-acetyl-D-glucosamine residues in chitodextrins.. Its function is as follows. Lysozymes have primarily a bacteriolytic function; those in tissues and body fluids are associated with the monocyte-macrophage system and enhance the activity of immunoagents. The sequence is that of Lysozyme C (LYZ) from Tragopan temminckii (Temminck's tragopan).